A 192-amino-acid chain; its full sequence is Glycerol-3-phosphate acyltransferase (192 aa).

Helical transmembrane passes span 5-25, 50-70, 78-98, 112-132, and 153-173; these read VVLI…ITRI, FLAA…VYIA, DFYI…PIWL, ILIA…IIVF, and SFFF…LVFL.

The protein belongs to the PlsY family. As to quaternary structure, probably interacts with PlsX.

The protein resides in the cell membrane. It catalyses the reaction an acyl phosphate + sn-glycerol 3-phosphate = a 1-acyl-sn-glycero-3-phosphate + phosphate. Its pathway is lipid metabolism; phospholipid metabolism. Its function is as follows. Catalyzes the transfer of an acyl group from acyl-phosphate (acyl-PO(4)) to glycerol-3-phosphate (G3P) to form lysophosphatidic acid (LPA). This enzyme utilizes acyl-phosphate as fatty acyl donor, but not acyl-CoA or acyl-ACP. This Wolbachia pipientis wMel protein is Glycerol-3-phosphate acyltransferase.